A 141-amino-acid polypeptide reads, in one-letter code: Putative RING-H2 finger protein ATL62 (141 aa).

A helical membrane pass occupies residues 14 to 32 (FFAILTVFYSIFRCCLAYC). The RING-type; degenerate zinc finger occupies 79 to 121 (CVVCLSKFIDEDKARVLPSCNHCFHFDFTDTWLHSDYTCPNCR).

This sequence belongs to the RING-type zinc finger family. ATL subfamily.

The protein localises to the membrane. The catalysed reaction is S-ubiquitinyl-[E2 ubiquitin-conjugating enzyme]-L-cysteine + [acceptor protein]-L-lysine = [E2 ubiquitin-conjugating enzyme]-L-cysteine + N(6)-ubiquitinyl-[acceptor protein]-L-lysine.. It participates in protein modification; protein ubiquitination. This is Putative RING-H2 finger protein ATL62 (ATL62) from Arabidopsis thaliana (Mouse-ear cress).